We begin with the raw amino-acid sequence, 183 residues long: ATP synthase subunit b, chloroplastic (183 aa).

The helical transmembrane segment at 27-49 (LATNPINLSVVLGVLIFFGKGVL) threads the bilayer.

This sequence belongs to the ATPase B chain family. In terms of assembly, F-type ATPases have 2 components, F(1) - the catalytic core - and F(0) - the membrane proton channel. F(1) has five subunits: alpha(3), beta(3), gamma(1), delta(1), epsilon(1). F(0) has four main subunits: a(1), b(1), b'(1) and c(10-14). The alpha and beta chains form an alternating ring which encloses part of the gamma chain. F(1) is attached to F(0) by a central stalk formed by the gamma and epsilon chains, while a peripheral stalk is formed by the delta, b and b' chains.

Its subcellular location is the plastid. It is found in the chloroplast thylakoid membrane. Its function is as follows. F(1)F(0) ATP synthase produces ATP from ADP in the presence of a proton or sodium gradient. F-type ATPases consist of two structural domains, F(1) containing the extramembraneous catalytic core and F(0) containing the membrane proton channel, linked together by a central stalk and a peripheral stalk. During catalysis, ATP synthesis in the catalytic domain of F(1) is coupled via a rotary mechanism of the central stalk subunits to proton translocation. Component of the F(0) channel, it forms part of the peripheral stalk, linking F(1) to F(0). The chain is ATP synthase subunit b, chloroplastic from Ranunculus macranthus (Large buttercup).